Here is a 490-residue protein sequence, read N- to C-terminus: tRNA-2-methylthio-N(6)-dimethylallyladenosine synthase (490 aa).

An MTTase N-terminal domain is found at 37–154 (KKVYIATQGC…LPELYDKSTT (118 aa)). Residues C46, C83, C117, C198, C202, and C205 each contribute to the [4Fe-4S] cluster site. Positions 184–416 (KVEGYRAFVS…QKVIRDSTLK (233 aa)) constitute a Radical SAM core domain. One can recognise a TRAM domain in the interval 419-487 (EEMVGKTLRV…PHMVRGELVD (69 aa)).

Belongs to the methylthiotransferase family. MiaB subfamily. As to quaternary structure, monomer. Requires [4Fe-4S] cluster as cofactor.

The protein resides in the cytoplasm. It catalyses the reaction N(6)-dimethylallyladenosine(37) in tRNA + (sulfur carrier)-SH + AH2 + 2 S-adenosyl-L-methionine = 2-methylsulfanyl-N(6)-dimethylallyladenosine(37) in tRNA + (sulfur carrier)-H + 5'-deoxyadenosine + L-methionine + A + S-adenosyl-L-homocysteine + 2 H(+). Catalyzes the methylthiolation of N6-(dimethylallyl)adenosine (i(6)A), leading to the formation of 2-methylthio-N6-(dimethylallyl)adenosine (ms(2)i(6)A) at position 37 in tRNAs that read codons beginning with uridine. The chain is tRNA-2-methylthio-N(6)-dimethylallyladenosine synthase from Psychrobacter sp. (strain PRwf-1).